Reading from the N-terminus, the 433-residue chain is Agnestins efflux protein AgnL12 (433 aa).

Composition is skewed to polar residues over residues 1 to 10 and 25 to 40; these read MSRSTSTELQ and SIAS…PPST. Residues 1–40 form a disordered region; sequence MSRSTSTELQQELPASKEVPPDPTSIASSETASGSKPPST. The next 12 helical transmembrane spans lie at 47–67, 87–107, 116–136, 141–161, 174–194, 205–225, 248–268, 285–305, 309–329, 335–355, 370–390, and 401–421; these read ILVL…TNAF, ISWI…ISGY, LLIC…SLST, IFLT…LPAM, LAMG…PIAL, WTVR…CLAI, VMIF…SPFF, FYMV…PGLI, VGNY…ACCW, VGGI…VISL, GVAM…GTPI, and LGLS…ILLA.

This sequence belongs to the major facilitator superfamily. Monocarboxylate porter (TC 2.A.1.13) family.

The protein resides in the cell membrane. In terms of biological role, efflux pump that may be involved in the secretion of agnestins, dihydroxy-xanthone metabolites. This is Agnestins efflux protein AgnL12 from Paecilomyces divaricatus (Penicillium divaricatum).